The chain runs to 418 residues: MTLEETIVEVGVRAKAAAADLMSLATRQKDAVLSQVGELLVAEKAFLQEENEKDLAAGREKGLSDAMLDRLALTDSVIESMVKGLKEVIALPDPVGRTLGSVKRPNGLSVGRMCVPLGVIAMIYESRPNVTIDAAALCLKAGNAIILRGGSEAIHSNLALASILRRALEEAEVNPDSVQVIPMIDREAITIMLGLEDSIDLVIPRGGEGLIRFVSKNSSIPVLKHYKGVCHAYIDKDADLAKVAPIVINAKTQRPGVCNALEGILIHEDIVADVLPGLATELAELGVEMRGCSQSLPFSEHIVAASEEDWGTEFLRLCLCVKVVRSFEDAKSYIRKYGSQHTEAIITENYTTAHRFVAEVDASAVVVNASTRFNDGGELGLGAEIGISTTKLHAYGPMGLEELTTKKFVILGDGQIRS.

Belongs to the gamma-glutamyl phosphate reductase family.

Its subcellular location is the cytoplasm. The enzyme catalyses L-glutamate 5-semialdehyde + phosphate + NADP(+) = L-glutamyl 5-phosphate + NADPH + H(+). The protein operates within amino-acid biosynthesis; L-proline biosynthesis; L-glutamate 5-semialdehyde from L-glutamate: step 2/2. Catalyzes the NADPH-dependent reduction of L-glutamate 5-phosphate into L-glutamate 5-semialdehyde and phosphate. The product spontaneously undergoes cyclization to form 1-pyrroline-5-carboxylate. This Desulfotalea psychrophila (strain LSv54 / DSM 12343) protein is Gamma-glutamyl phosphate reductase.